The sequence spans 294 residues: Foldase protein PrsA 1 (294 aa).

A signal peptide spans 1-21 (MTKLKKVMISLVAATLLLLAG). Cys-22 carries the N-palmitoyl cysteine lipid modification. Cys-22 is lipidated: S-diacylglycerol cysteine. The 92-residue stretch at 135–226 (EPNITVRHIL…YGYHLIQLVK (92 aa)) folds into the PpiC domain.

This sequence belongs to the PrsA family.

It localises to the cell membrane. It carries out the reaction [protein]-peptidylproline (omega=180) = [protein]-peptidylproline (omega=0). Its function is as follows. Plays a major role in protein secretion by helping the post-translocational extracellular folding of several secreted proteins. This chain is Foldase protein PrsA 1 (prsA1), found in Listeria innocua serovar 6a (strain ATCC BAA-680 / CLIP 11262).